Reading from the N-terminus, the 325-residue chain is Eukaryotic translation initiation factor 3 subunit I (325 aa).

WD repeat units lie at residues 8 to 47 (GHER…RLGT), 50 to 89 (GHTG…QLAL), 144 to 183 (CSDS…QLSN), 186 to 225 (EHTK…HLKT), and 283 to 324 (GHFG…FEFE).

This sequence belongs to the eIF-3 subunit I family. In terms of assembly, component of the eukaryotic translation initiation factor 3 (eIF-3) complex, which is composed of 13 subunits: EIF3A, EIF3B, EIF3C, EIF3D, EIF3E, EIF3F, EIF3G, EIF3H, EIF3I, EIF3J, EIF3K, EIF3L and EIF3M.

The protein resides in the cytoplasm. Functionally, component of the eukaryotic translation initiation factor 3 (eIF-3) complex, which is involved in protein synthesis of a specialized repertoire of mRNAs and, together with other initiation factors, stimulates binding of mRNA and methionyl-tRNAi to the 40S ribosome. The eIF-3 complex specifically targets and initiates translation of a subset of mRNAs involved in cell proliferation. This Taeniopygia guttata (Zebra finch) protein is Eukaryotic translation initiation factor 3 subunit I.